Consider the following 543-residue polypeptide: CTP synthase (543 aa).

Residues 1-265 (MTNYIFVTGG…DQLVVDRFGL (265 aa)) are amidoligase domain. Position 13 (Ser13) interacts with CTP. Residue Ser13 participates in UTP binding. ATP contacts are provided by residues 14 to 19 (SLGKGI) and Asp71. Mg(2+)-binding residues include Asp71 and Glu139. Residues 146–148 (DIE), 186–191 (KTKPTQ), and Lys222 contribute to the CTP site. Residues 186–191 (KTKPTQ) and Lys222 each bind UTP. 238 to 240 (KDV) contributes to the ATP binding site. The region spanning 290–541 (NIGMIGKYVE…VAAAGKYQKE (252 aa)) is the Glutamine amidotransferase type-1 domain. Residue Gly351 coordinates L-glutamine. Cys378 serves as the catalytic Nucleophile; for glutamine hydrolysis. L-glutamine is bound by residues 379–382 (LGMQ), Glu402, and Arg469. Residues His514 and Glu516 contribute to the active site.

The protein belongs to the CTP synthase family. Homotetramer.

The enzyme catalyses UTP + L-glutamine + ATP + H2O = CTP + L-glutamate + ADP + phosphate + 2 H(+). The catalysed reaction is L-glutamine + H2O = L-glutamate + NH4(+). It carries out the reaction UTP + NH4(+) + ATP = CTP + ADP + phosphate + 2 H(+). It functions in the pathway pyrimidine metabolism; CTP biosynthesis via de novo pathway; CTP from UDP: step 2/2. With respect to regulation, allosterically activated by GTP, when glutamine is the substrate; GTP has no effect on the reaction when ammonia is the substrate. The allosteric effector GTP functions by stabilizing the protein conformation that binds the tetrahedral intermediate(s) formed during glutamine hydrolysis. Inhibited by the product CTP, via allosteric rather than competitive inhibition. Catalyzes the ATP-dependent amination of UTP to CTP with either L-glutamine or ammonia as the source of nitrogen. Regulates intracellular CTP levels through interactions with the four ribonucleotide triphosphates. In Alteromonas mediterranea (strain DSM 17117 / CIP 110805 / LMG 28347 / Deep ecotype), this protein is CTP synthase.